The chain runs to 80 residues: Small ribosomal subunit protein bS16 (80 aa).

Belongs to the bacterial ribosomal protein bS16 family.

The protein is Small ribosomal subunit protein bS16 of Nitrosococcus oceani (strain ATCC 19707 / BCRC 17464 / JCM 30415 / NCIMB 11848 / C-107).